The primary structure comprises 835 residues: Phenylalanine--tRNA ligase beta subunit (835 aa).

A tRNA-binding domain is found at 44 to 158; sequence GPVDGPLTVG…LPGADGADVL (115 aa). The region spanning 414-493 is the B5 domain; it reads WSLPPIRIAV…RLEGLEVIRS (80 aa). Residues aspartate 471, aspartate 477, glutamate 480, and glutamate 481 each contribute to the Mg(2+) site. One can recognise an FDX-ACB domain in the interval 741-834; it reads SPFPAVLQDV…AAERVGATLR (94 aa).

It belongs to the phenylalanyl-tRNA synthetase beta subunit family. Type 1 subfamily. As to quaternary structure, tetramer of two alpha and two beta subunits. Mg(2+) serves as cofactor.

The protein resides in the cytoplasm. The catalysed reaction is tRNA(Phe) + L-phenylalanine + ATP = L-phenylalanyl-tRNA(Phe) + AMP + diphosphate + H(+). The polypeptide is Phenylalanine--tRNA ligase beta subunit (Mycobacterium leprae (strain TN)).